Consider the following 385-residue polypeptide: GDSL esterase/lipase 5 (385 aa).

An N-terminal signal peptide occupies residues methionine 1–serine 35. Asparagine 45 carries an N-linked (GlcNAc...) asparagine glycan. Serine 55 acts as the Nucleophile in catalysis. Residues asparagine 66, asparagine 194, asparagine 211, and asparagine 289 are each glycosylated (N-linked (GlcNAc...) asparagine). Residues aspartate 345 and histidine 348 contribute to the active site.

This sequence belongs to the 'GDSL' lipolytic enzyme family.

It is found in the secreted. The chain is GDSL esterase/lipase 5 (GLIP5) from Arabidopsis thaliana (Mouse-ear cress).